A 1068-amino-acid polypeptide reads, in one-letter code: Self-sufficient cytochrome P450 monooxygenase CYP505U2 (1068 aa).

Cysteine 408 lines the heme pocket. The interval 464–498 (TTAGMVPESVQSLRQAQKSGKPGNSKSSANESMVG) is disordered. Over residues 472–498 (SVQSLRQAQKSGKPGNSKSSANESMVG) the composition is skewed to polar residues. The region spanning 505-646 (VSIFYGSNSG…DLEKWEESIL (142 aa)) is the Flavodoxin-like domain. FMN is bound by residues 511–515 (SNSGS) and 590–622 (VFGC…QRVA). An FAD-binding FR-type domain is found at 679–909 (KEFLEATVTS…RRSNPAFHPP (231 aa)).

In the N-terminal section; belongs to the cytochrome P450 family. Requires FAD as cofactor. FMN serves as cofactor. Heme is required as a cofactor.

It carries out the reaction 2 oxidized [cytochrome P450] + NADPH = 2 reduced [cytochrome P450] + NADP(+) + H(+). The catalysed reaction is an organic molecule + reduced [NADPH--hemoprotein reductase] + O2 = an alcohol + oxidized [NADPH--hemoprotein reductase] + H2O + H(+). It catalyses the reaction dodecanoate + reduced [NADPH--hemoprotein reductase] + O2 = 3-hydroxydodecanoate + oxidized [NADPH--hemoprotein reductase] + H2O + H(+). The enzyme catalyses dodecanoate + reduced [NADPH--hemoprotein reductase] + O2 = 7-hydroxydodecanoate + oxidized [NADPH--hemoprotein reductase] + H2O + H(+). It carries out the reaction dodecan-1-ol + reduced [NADPH--hemoprotein reductase] + O2 = 1,4-dodecanediol + oxidized [NADPH--hemoprotein reductase] + H2O + H(+). The catalysed reaction is dodecan-1-ol + reduced [NADPH--hemoprotein reductase] + O2 = 1,3-dodecanediol + oxidized [NADPH--hemoprotein reductase] + H2O + H(+). Self-sufficient cytochrome P450 monooxygenase that catalyzes the regioselective in-chain hydroxylation of alkanes, fatty alcohols, and fatty acids. Preferentially hydroxylates 1-dodecanol at C3 and C4 (positions omega-8 and omega-9). It is very likely that CYP505U2 prefers dodecanol, and probably other fatty alcohols, over fatty acids as substrates. Does not show any significant activity toward tetradecanoic acid. The polypeptide is Self-sufficient cytochrome P450 monooxygenase CYP505U2 (Exserohilum turcicum (strain 28A) (Northern leaf blight fungus)).